Consider the following 416-residue polypeptide: Gamma-glutamyl phosphate reductase (416 aa).

It belongs to the gamma-glutamyl phosphate reductase family.

Its subcellular location is the cytoplasm. The enzyme catalyses L-glutamate 5-semialdehyde + phosphate + NADP(+) = L-glutamyl 5-phosphate + NADPH + H(+). It participates in amino-acid biosynthesis; L-proline biosynthesis; L-glutamate 5-semialdehyde from L-glutamate: step 2/2. In terms of biological role, catalyzes the NADPH-dependent reduction of L-glutamate 5-phosphate into L-glutamate 5-semialdehyde and phosphate. The product spontaneously undergoes cyclization to form 1-pyrroline-5-carboxylate. This Leptospira borgpetersenii serovar Hardjo-bovis (strain JB197) protein is Gamma-glutamyl phosphate reductase.